Consider the following 186-residue polypeptide: Ribosome-recycling factor (186 aa).

The protein belongs to the RRF family.

The protein resides in the cytoplasm. Functionally, responsible for the release of ribosomes from messenger RNA at the termination of protein biosynthesis. May increase the efficiency of translation by recycling ribosomes from one round of translation to another. The polypeptide is Ribosome-recycling factor (Cytophaga hutchinsonii (strain ATCC 33406 / DSM 1761 / CIP 103989 / NBRC 15051 / NCIMB 9469 / D465)).